The chain runs to 396 residues: MNNEPVKRGKKNRWELNLPIMTYVVADDWIDKLGRETFTLWLRFHTWVDREDELRDYDRIPRSFENIYKKTLGISKSKFYRLIKPLWEYGLIDIIEYEESNRNSTKPKNIIVYEYPLHEIERKYKPLEKLRDWDKDYNSVSKELGKTGGRPRKKDSEEEPEKKPEEVTKKKRKYKLKRVIHNGFKNETVEGFKNETVEGFKNETVTVSKIKPNNYSNIFNNLSNISTNVSNNLLIDDDEEIENEPTGRTINRSLLFSQEDIKQAYQFINRFSVIQLRENFSFDKHFEERLVCYLWKAGISTFYTHEISKMIKKIADYEKSKKGRLNPIRDRALYMVNGLVMNRASSQSEHATYKLNQYKKQKEQEKQQQEQQRSRVPFYNWLEEREEQTEGQLPTT.

Disordered regions lie at residues 141–170 and 356–396; these read SKEL…VTKK and NQYK…LPTT. Basic and acidic residues predominate over residues 154–168; sequence KDSEEEPEKKPEEVT.

This is Protein RepA (repA) from Bacillus subtilis.